The primary structure comprises 282 residues: Transcription factor LBX1 (282 aa).

A compositionally biased stretch (basic and acidic residues) spans 1 to 20 (MTSKEDGKAAPGEERRRSPL). A disordered region spans residues 1-36 (MTSKEDGKAAPGEERRRSPLDHLPPPANSNKPLTPF). Residues 125–184 (RRKSRTAFTNHQIYELEKRFLYQKYLSPADRDQIAQQLGLTNAQVITWFQNRRAKLKRDL) constitute a DNA-binding region (homeobox). A disordered region spans residues 210-282 (ELEQNSEASG…EEDEEIDVDD (73 aa)). A compositionally biased stretch (gly residues) spans 218-227 (SGGGGGGGCG). Acidic residues predominate over residues 269 to 282 (CSEDEEDEEIDVDD).

Interacts with SKOR1 which acts as a transcriptional corepressor. As to expression, expressed in the dorsal part of the spinal cord and hindbrain and in presumptive myogenic cells in lateral regions of differentiating somites.

The protein localises to the nucleus. In terms of biological role, transcription factor required for the development of GABAergic interneurons in the dorsal horn of the spinal cord and migration and further development of hypaxial muscle precursor cells for limb muscles, diaphragm and hypoglossal cord. This chain is Transcription factor LBX1 (Lbx1), found in Mus musculus (Mouse).